The primary structure comprises 732 residues: MKLFFRYVNSRVWSQAGSSHFNKALAKGPKTTTWIWSLHADAHDFQQSSSESTAASVGAKVFSSGLAHFSIVFFWLGGMHFHGAYFSNYSAWLKDPKTPGSQLVWSLVGQDILNQDLGGYFQSIRVTSGFFQLWRAEGIVTQVHLKYAAAAALIGSIATLWAAYFHMHISWSSSLRTMGSLSSYNAGQLAILAGLGSISWAGHQIHIALPINRLLDSGVDPSQLPSPQDLLFKDLMQVIFPGFGVGPAVDFSIYLNQKGAASEVGLNPSTGSIYLGQIASHHFFVGITCIISGIIALLVKRSKAGSFQDAAAFNNSWHSRLSINLAIAGSLSITFAHHIYAMPVYPFCGSDYATVLSLFVHHMWIGGFFIVGAGAHASIFMIRDEGVPAGIPSAKGRLYSVNSIIQQLLAHRDIIMGHLIYVTIALGMHAFGIYIHNDTLQALGRPEDIFSDNSIQLKPLFAVWVQSLPSLFLLNTLSGDAAVTGIPGFGLEVLDGKVVTMTQELGTADFMVHHIHAFTIHCTLLILMKGVLYSRSSRLVSDKLELGFRYPCDGPGRGGTCQISPWDHVFLGVFWMYNSLSIVIFHFFWKMQSDVWGVYDVSTQKIVHLTGGDFSVNSITINGWLRNFLWSQAAEVIQSYGSGLSGYGLIFLGAHFTWAFSLMFLWSGRGYWQELIESILWAHHKLKIVPNIQPRALSITQGRAVGLVHYMLGGIGTTWAFFLARVVALSIS.

The next 8 helical transmembrane spans lie at 61-84 (VFSS…FHGA), 145-168 (LKYA…FHMH), 185-209 (NAGQ…HIAL), 278-296 (IASH…GIIA), 317-340 (WHSR…HHIY), 356-382 (LSLF…IFMI), 414-436 (IIMG…IYIH), and 510-528 (FMVH…LILM). [4Fe-4S] cluster contacts are provided by Cys-552 and Cys-561. 2 consecutive transmembrane segments (helical) span residues 568–589 (HVFL…HFFW) and 644–666 (LSGY…MFLW). His-655 contributes to the chlorophyll a' binding site. Positions 663 and 671 each coordinate chlorophyll a. Trp-672 contacts phylloquinone. Residues 704-724 (AVGLVHYMLGGIGTTWAFFLA) form a helical membrane-spanning segment.

Belongs to the PsaA/PsaB family. In terms of assembly, the PsaA/B heterodimer binds the P700 chlorophyll special pair and subsequent electron acceptors. PSI consists of a core antenna complex that captures photons, and an electron transfer chain that converts photonic excitation into a charge separation. The eukaryotic PSI reaction center is composed of at least 11 subunits. P700 is a chlorophyll a/chlorophyll a' dimer, A0 is one or more chlorophyll a, A1 is one or both phylloquinones and FX is a shared 4Fe-4S iron-sulfur center. is required as a cofactor.

Its subcellular location is the plastid. The protein resides in the chloroplast thylakoid membrane. The enzyme catalyses reduced [plastocyanin] + hnu + oxidized [2Fe-2S]-[ferredoxin] = oxidized [plastocyanin] + reduced [2Fe-2S]-[ferredoxin]. Functionally, psaA and PsaB bind P700, the primary electron donor of photosystem I (PSI), as well as the electron acceptors A0, A1 and FX. PSI is a plastocyanin/cytochrome c6-ferredoxin oxidoreductase, converting photonic excitation into a charge separation, which transfers an electron from the donor P700 chlorophyll pair to the spectroscopically characterized acceptors A0, A1, FX, FA and FB in turn. Oxidized P700 is reduced on the lumenal side of the thylakoid membrane by plastocyanin or cytochrome c6. The sequence is that of Photosystem I P700 chlorophyll a apoprotein A1 from Heterocapsa triquetra (Dinoflagellate).